The sequence spans 172 residues: GTP-dependent dephospho-CoA kinase (172 aa).

GTP-binding residues include aspartate 40, valine 41, valine 42, aspartate 59, and glutamate 112.

It belongs to the GTP-dependent DPCK family.

The catalysed reaction is 3'-dephospho-CoA + GTP = GDP + CoA + H(+). It participates in cofactor biosynthesis; coenzyme A biosynthesis. Its function is as follows. Catalyzes the GTP-dependent phosphorylation of the 3'-hydroxyl group of dephosphocoenzyme A to form coenzyme A (CoA). This chain is GTP-dependent dephospho-CoA kinase, found in Methanospirillum hungatei JF-1 (strain ATCC 27890 / DSM 864 / NBRC 100397 / JF-1).